We begin with the raw amino-acid sequence, 287 residues long: MSFTARQIGAPNTLDYRVFIEQNGKPVSPFHDIPLYANEEKTVLNMIVEVPRWTNAKLEISKEEKLNPILQDTKKGKLRFVRNCFPHHGYIHNYGAFPQTWEDPNQVHPETKAKGDNDPLDVCEIGEQVGYVGQVKQVKVLGVMALLDEGETDWKIIVIDVNDPLASKLNDIEDVETHLPGLLRATNEWFRIYKIPDGKPENQFAFSGECKNKKYAEEIINECSEAWEKLIKGETADSKGISLDNTTLSSTQTFSEAAASGVPPASVQPAAPIDKSVDKWFFISGAH.

Residue arginine 79 participates in diphosphate binding. Positions 116, 121, and 153 each coordinate Mg(2+).

The protein belongs to the PPase family. It depends on Mg(2+) as a cofactor.

The protein resides in the cytoplasm. It carries out the reaction diphosphate + H2O = 2 phosphate + H(+). The chain is Inorganic pyrophosphatase (IPP1) from Debaryomyces hansenii (strain ATCC 36239 / CBS 767 / BCRC 21394 / JCM 1990 / NBRC 0083 / IGC 2968) (Yeast).